Consider the following 185-residue polypeptide: Dual-action ribosomal maturation protein DarP (185 aa).

A disordered region spans residues 1–22 (MWKNGAMRGCNKETGEFLGPSR).

This sequence belongs to the DarP family.

The protein localises to the cytoplasm. Member of a network of 50S ribosomal subunit biogenesis factors which assembles along the 30S-50S interface, preventing incorrect 23S rRNA structures from forming. Promotes peptidyl transferase center (PTC) maturation. In Xylella fastidiosa (strain 9a5c), this protein is Dual-action ribosomal maturation protein DarP.